A 421-amino-acid chain; its full sequence is Odorant receptor 67b (421 aa).

Over Met1–Arg48 the chain is Cytoplasmic. Residues Ile49–Asn69 form a helical membrane-spanning segment. At Tyr70–Met71 the chain is on the extracellular side. Residues Ile72–Val92 traverse the membrane as a helical segment. Residues Lys93–Gln151 lie on the Cytoplasmic side of the membrane. The helical transmembrane segment at Val152–Phe172 threads the bilayer. The Extracellular portion of the chain corresponds to Gln173 to Gln217. A helical membrane pass occupies residues Ser218–Thr238. Over Arg239–Asn289 the chain is Cytoplasmic. The helical transmembrane segment at Leu290–Leu310 threads the bilayer. The Extracellular portion of the chain corresponds to Tyr311 to Thr315. The chain crosses the membrane as a helical span at residues Val316–Leu336. The Cytoplasmic portion of the chain corresponds to Glu337–Arg384. The chain crosses the membrane as a helical span at residues Thr385–Phe405. The Extracellular portion of the chain corresponds to Arg406 to Lys421.

Belongs to the insect chemoreceptor superfamily. Heteromeric odorant receptor channel (TC 1.A.69) family. Or63a subfamily. Interacts with Orco. Complexes exist early in the endomembrane system in olfactory sensory neurons (OSNs), coupling these complexes to the conserved ciliary trafficking pathway.

The protein resides in the cell membrane. Odorant receptor which mediates acceptance or avoidance behavior, depending on its substrates. The odorant receptor repertoire encodes a large collection of odor stimuli that vary widely in identity, intensity, and duration. May form a complex with Orco to form odorant-sensing units, providing sensitive and prolonged odorant signaling and calcium permeability. Involved in the behavioral responses to ethyl acetate, pentyl acetate, methyl caproate, anisole, heptanal, 2-heptanone, r-carvone, nonanoic acid, and pyrazines. This is Odorant receptor 67b (Or67b) from Drosophila melanogaster (Fruit fly).